The following is a 483-amino-acid chain: MSPQTETKASVGFKAGVKEYKLTYYTPEYETKDTDILAAFRVTPQPGVPPEEAGAAVAAESSTGTWTTVWTDGLTSLDRYKGRCYHIEPVPGEESQFIAYVAYPLDLFEEGSVTNMFTSIVGNVFGFKALAALRLEDLRIPPAYTKTFQGPPHGIQVERDKLNKYGRPLLGCTIKPKLGLSAKNYGRAVYECLRGGLDFTKDDENVNSQPFMRWRDRFLFCAEAIYKSQAETGEIKGHYLNATAGTCEEMIKRAVFARELGVPIVMHDYLTGGFTANTSLAHYCRDNGLLLHIHRAMHAVIDRQKNHGMHFRVLAKALRLSGGDHIHAGTVVGKLEGDRESTLGFVDLLRDDYVEKDRSRGIFFTQDWVSLPGVLPVASGGIHVWHMPALTEIFGDDSVLQFGGGTLGHPWGNAPGAVANRVALEACVQARNEGRDLAVEGNEIIREACKWSPELAAACEVWKEIRFNFPTIDKLDPSAEKVA.

A propeptide spanning residues 1-2 (MS) is cleaved from the precursor. The substrate site is built by asparagine 123 and threonine 173. The Proton acceptor role is filled by lysine 175. Lysine 177 is a substrate binding site. Residues lysine 201, aspartate 203, and glutamate 204 each coordinate Mg(2+). Residue lysine 201 is modified to N6-carboxylysine. At serine 208 the chain carries Phosphoserine. The active-site Proton acceptor is histidine 294. Substrate is bound by residues arginine 295 and histidine 327. Threonine 330 carries the phosphothreonine modification. Residue serine 379 coordinates substrate.

This sequence belongs to the RuBisCO large chain family. Type I subfamily. In terms of assembly, heterohexadecamer of 8 large chains and 8 small chains; disulfide-linked. The disulfide link is formed within the large subunit homodimers. It depends on Mg(2+) as a cofactor. Post-translationally, the disulfide bond which can form in the large chain dimeric partners within the hexadecamer appears to be associated with oxidative stress and protein turnover.

The protein resides in the plastid. Its subcellular location is the chloroplast. It catalyses the reaction 2 (2R)-3-phosphoglycerate + 2 H(+) = D-ribulose 1,5-bisphosphate + CO2 + H2O. It carries out the reaction D-ribulose 1,5-bisphosphate + O2 = 2-phosphoglycolate + (2R)-3-phosphoglycerate + 2 H(+). Functionally, ruBisCO catalyzes two reactions: the carboxylation of D-ribulose 1,5-bisphosphate, the primary event in carbon dioxide fixation, as well as the oxidative fragmentation of the pentose substrate in the photorespiration process. Both reactions occur simultaneously and in competition at the same active site. In Aethionema cordifolium (Lebanon stonecress), this protein is Ribulose bisphosphate carboxylase large chain.